A 287-amino-acid chain; its full sequence is Polyamine aminopropyltransferase (287 aa).

Residues 5-238 (EIWYETLHAN…GIMTFAWASN (234 aa)) enclose the PABS domain. Glutamine 33 serves as a coordination point for S-methyl-5'-thioadenosine. Residues histidine 64 and aspartate 88 each coordinate spermidine. S-methyl-5'-thioadenosine is bound by residues glutamate 108 and 140–141 (DG). Aspartate 158 (proton acceptor) is an active-site residue. 158-161 (DCTD) contacts spermidine. Proline 165 provides a ligand contact to S-methyl-5'-thioadenosine.

Belongs to the spermidine/spermine synthase family. In terms of assembly, homodimer or homotetramer.

The protein localises to the cytoplasm. It carries out the reaction S-adenosyl 3-(methylsulfanyl)propylamine + putrescine = S-methyl-5'-thioadenosine + spermidine + H(+). The protein operates within amine and polyamine biosynthesis; spermidine biosynthesis; spermidine from putrescine: step 1/1. Its function is as follows. Catalyzes the irreversible transfer of a propylamine group from the amino donor S-adenosylmethioninamine (decarboxy-AdoMet) to putrescine (1,4-diaminobutane) to yield spermidine. In Pectobacterium carotovorum subsp. carotovorum (strain PC1), this protein is Polyamine aminopropyltransferase.